The primary structure comprises 671 residues: MEPIEQQLTELRTTLRHHEYLYHVMDAPEIPDAEYDRLMRELRALEAQRPDLITPDSPTQRVGAAPLTAFNQIRHEVPMLSLDNVFDEESFLAFNKRVQDRLKSTENVTWCCELKLDGLAVSILYENGVLVRAATRGDGTTGEDITSNVRTIRAIPLKLRGDNIPARLEVRGEVFLPQAGFEKINEEARRSGGKVFANPRNAAAGSLRQLDPRITAKRPLTFFCYGVGILEGGELPDTHLGRLLQFKAWGLPVSDRVTLCDSPQAVLAFYHNVEEDRPTLGFDIDGVVIKVNSLALQEQLGFVARAPRWAVAFKFPAQEQMTFVRDVEFQVGRTGAITPVARLEPVQVAGVLVSNATLHNADEIDRLGLRIGDKVVIRRAGDVIPQVVNVVLSERPEETRPIVFPTHCPVCGSDVERVEGEAVTRCTGGLICGAQRKESLKHFVSRRAMDVDGMGDKIIDQLVEREYVHTPADLFRLTAGKLTGLDRMGPKSAQNVVNALEKAKATIFARFLYALGIREVGEATAAGLAAYFGTLEALQAASIDELQKVPDVGIVVATHVFNFFAEESNREVIGQLLAEGVHWPAPVVINAQEIDSPFAGKTVVLTGSLSQMSRDDAKARLVELGAKVAGSVSKKTDLVIAGEAAGSKLAKAQELGIDVIDEAEMLRLLGV.

Residues Asp32–Asp36, Ser81–Leu82, and Glu113 each bind NAD(+). Lys115 functions as the N6-AMP-lysine intermediate in the catalytic mechanism. 4 residues coordinate NAD(+): Arg136, Glu173, Lys290, and Lys314. Positions 408, 411, 426, and 432 each coordinate Zn(2+). The region spanning Glu593–Val671 is the BRCT domain.

Belongs to the NAD-dependent DNA ligase family. LigA subfamily. Requires Mg(2+) as cofactor. It depends on Mn(2+) as a cofactor.

It catalyses the reaction NAD(+) + (deoxyribonucleotide)n-3'-hydroxyl + 5'-phospho-(deoxyribonucleotide)m = (deoxyribonucleotide)n+m + AMP + beta-nicotinamide D-nucleotide.. Its function is as follows. DNA ligase that catalyzes the formation of phosphodiester linkages between 5'-phosphoryl and 3'-hydroxyl groups in double-stranded DNA using NAD as a coenzyme and as the energy source for the reaction. It is essential for DNA replication and repair of damaged DNA. This Salmonella arizonae (strain ATCC BAA-731 / CDC346-86 / RSK2980) protein is DNA ligase.